A 266-amino-acid chain; its full sequence is Undecaprenyl-diphosphatase (266 aa).

The next 8 helical transmembrane spans lie at Leu4–Ser24, Gly41–Tyr61, Ala79–Val99, Leu108–Ile128, Met143–Val163, Ala184–Trp204, Ile220–Val240, and Phe243–Leu263.

The protein belongs to the UppP family.

It localises to the cell inner membrane. The catalysed reaction is di-trans,octa-cis-undecaprenyl diphosphate + H2O = di-trans,octa-cis-undecaprenyl phosphate + phosphate + H(+). Catalyzes the dephosphorylation of undecaprenyl diphosphate (UPP). Confers resistance to bacitracin. This chain is Undecaprenyl-diphosphatase, found in Sphingopyxis alaskensis (strain DSM 13593 / LMG 18877 / RB2256) (Sphingomonas alaskensis).